We begin with the raw amino-acid sequence, 315 residues long: Transaldolase (315 aa).

Catalysis depends on K131, which acts as the Schiff-base intermediate with substrate.

It belongs to the transaldolase family. Type 1 subfamily. Homodimer.

It localises to the cytoplasm. It carries out the reaction D-sedoheptulose 7-phosphate + D-glyceraldehyde 3-phosphate = D-erythrose 4-phosphate + beta-D-fructose 6-phosphate. Its pathway is carbohydrate degradation; pentose phosphate pathway; D-glyceraldehyde 3-phosphate and beta-D-fructose 6-phosphate from D-ribose 5-phosphate and D-xylulose 5-phosphate (non-oxidative stage): step 2/3. Transaldolase is important for the balance of metabolites in the pentose-phosphate pathway. The polypeptide is Transaldolase (Actinobacillus pleuropneumoniae serotype 7 (strain AP76)).